We begin with the raw amino-acid sequence, 345 residues long: Biotin synthase (345 aa).

Residues 60–287 (NQVQLSTLLS…RTMVRLSAGR (228 aa)) form the Radical SAM core domain. [4Fe-4S] cluster contacts are provided by C75, C79, and C82. The [2Fe-2S] cluster site is built by C119, C150, C210, and R282.

Belongs to the radical SAM superfamily. Biotin synthase family. In terms of assembly, homodimer. Requires [4Fe-4S] cluster as cofactor. [2Fe-2S] cluster serves as cofactor.

The enzyme catalyses (4R,5S)-dethiobiotin + (sulfur carrier)-SH + 2 reduced [2Fe-2S]-[ferredoxin] + 2 S-adenosyl-L-methionine = (sulfur carrier)-H + biotin + 2 5'-deoxyadenosine + 2 L-methionine + 2 oxidized [2Fe-2S]-[ferredoxin]. Its pathway is cofactor biosynthesis; biotin biosynthesis; biotin from 7,8-diaminononanoate: step 2/2. In terms of biological role, catalyzes the conversion of dethiobiotin (DTB) to biotin by the insertion of a sulfur atom into dethiobiotin via a radical-based mechanism. This Polaromonas naphthalenivorans (strain CJ2) protein is Biotin synthase.